The chain runs to 357 residues: Phosphoribosylformylglycinamidine cyclo-ligase (357 aa).

This sequence belongs to the AIR synthase family.

It localises to the cytoplasm. It catalyses the reaction 2-formamido-N(1)-(5-O-phospho-beta-D-ribosyl)acetamidine + ATP = 5-amino-1-(5-phospho-beta-D-ribosyl)imidazole + ADP + phosphate + H(+). It functions in the pathway purine metabolism; IMP biosynthesis via de novo pathway; 5-amino-1-(5-phospho-D-ribosyl)imidazole from N(2)-formyl-N(1)-(5-phospho-D-ribosyl)glycinamide: step 2/2. This chain is Phosphoribosylformylglycinamidine cyclo-ligase, found in Rhodopseudomonas palustris (strain BisB18).